The primary structure comprises 243 residues: Probable transcriptional regulatory protein Athe_0816 (243 aa).

It belongs to the TACO1 family.

It localises to the cytoplasm. In Caldicellulosiruptor bescii (strain ATCC BAA-1888 / DSM 6725 / KCTC 15123 / Z-1320) (Anaerocellum thermophilum), this protein is Probable transcriptional regulatory protein Athe_0816.